Reading from the N-terminus, the 406-residue chain is COP9 signalosome complex subunit 4 (406 aa).

Alanine 2 is subject to N-acetylalanine. Residue lysine 25 is modified to N6-acetyllysine. A PCI domain is found at 197-366 (YRRKFIEAAQ…GIVHFETREA (170 aa)).

This sequence belongs to the CSN4 family. Component of the CSN complex, composed of COPS1/GPS1, COPS2, COPS3, COPS4, COPS5, COPS6, COPS7 (COPS7A or COPS7B), COPS8 and COPS9. In the complex, it probably interacts directly with COPS1, COPS2, COPS3, COPS5, COPS6, COPS7 (COPS7A or COPS7B) and COPS8. Interacts with TOR1A; the interaction is direct and associates TOR1A and SNAPIN with the CSN complex. Interacts with STON2; controls STON2 neddylation levels. Interacts with ERCC6.

It localises to the cytoplasm. The protein resides in the nucleus. It is found in the cytoplasmic vesicle. The protein localises to the secretory vesicle. Its subcellular location is the synaptic vesicle. Component of the COP9 signalosome complex (CSN), a complex involved in various cellular and developmental processes. The CSN complex is an essential regulator of the ubiquitin (Ubl) conjugation pathway by mediating the deneddylation of the cullin subunits of SCF-type E3 ligase complexes, leading to decrease the Ubl ligase activity of SCF-type complexes such as SCF, CSA or DDB2. Also involved in the deneddylation of non-cullin subunits such as STON2. The complex is also involved in phosphorylation of p53/TP53, c-jun/JUN, IkappaBalpha/NFKBIA, ITPK1, IRF8/ICSBP and SNAPIN, possibly via its association with CK2 and PKD kinases. CSN-dependent phosphorylation of TP53 and JUN promotes and protects degradation by the Ubl system, respectively. The sequence is that of COP9 signalosome complex subunit 4 (Cops4) from Rattus norvegicus (Rat).